The primary structure comprises 390 residues: MPDLKTMMLNFGPQHPAAHGVLRLVLEMDGEVIERADPHIGLLHRGTEKLIEHKTYLQALPYFDRLDYVSPMSQEHAYSLCVEKLLQCEVPIRAKYLRVLFCELTRILNHLLNVSSQALDVGAMTPLLWLFEEREKILEFYERASGARFHAAYIRPGGIAADVPEDLIEDIAKFIEQFPKYIDDVDELLTENRIWKQRTVGISEISIKQALDWGFSGPMLRAAGLAWDLRKSQPYEIYDQLDFDIPIGQNGDCYDRYLVRMAEIRQSISLVKQCIEKMPEGQIKTEDRKISPPSRAEMKKSMEALIHHFKLYSEGYHVPEGEAYAVVEAPKGEFGVYIVSDGTNRPYRCRIRAPGFAHLQALDFMAKGHMLADVAAIIGSLDIVFGEIDR.

Belongs to the complex I 49 kDa subunit family. NDH-1 is composed of 14 different subunits. Subunits NuoB, C, D, E, F, and G constitute the peripheral sector of the complex.

The protein resides in the cell membrane. It catalyses the reaction a quinone + NADH + 5 H(+)(in) = a quinol + NAD(+) + 4 H(+)(out). In terms of biological role, NDH-1 shuttles electrons from NADH, via FMN and iron-sulfur (Fe-S) centers, to quinones in the respiratory chain. The immediate electron acceptor for the enzyme in this species is believed to be ubiquinone. Couples the redox reaction to proton translocation (for every two electrons transferred, four hydrogen ions are translocated across the cytoplasmic membrane), and thus conserves the redox energy in a proton gradient. The protein is NADH-quinone oxidoreductase subunit D of Wolbachia pipientis wMel.